Here is a 498-residue protein sequence, read N- to C-terminus: MRINLTTSDPEVSIREKKNLGRIAQIIGPVLDVAFPPGKMPNIYNALVVKGRDTLGQEINVTCEVQQLLGNNRVRAVAMSATEGLKRGMDVVDMGNPLSVPVGGATLGRIFNVLGEPVDNLGPVDTRTTSPIHKSAPAFIQLDTKLSIFETGIKVVDLLAPYRRGGKIGLFGGAGVGKTVLIMELINNIAKAHGGVSVFGGVGERTREGNDLYMEMKESGVINEQNLAESKVALVYGQMNEPPGARMRVGLTALTMAEYFRDVNEQDVLLFIDNIFRFVQAGSEVSALLGRMPSAVGYQPTLSTEMGTLQERITSTKKGSITSIQAVYVPADDLTDPAPATTFAHLDATTVLSRGLAAKGIYPAVDPLDSTSTMLQPRIVGEEHYETAQQVKQTLQRYKELQDIIAILGLDELSEEDRLTVARARKIERFLSQPFFVAEVFTGSPGKYVGLAETIRGFKLILSGEFDSLPEQAFYLVGNIDEATAKATNLEMESKLKK.

Residue T6 is modified to Phosphothreonine. The residue at position 13 (S13) is a Phosphoserine. Residue 172-179 (GGAGVGKT) coordinates ATP.

This sequence belongs to the ATPase alpha/beta chains family. As to quaternary structure, F-type ATPases have 2 components, CF(1) - the catalytic core - and CF(0) - the membrane proton channel. CF(1) has five subunits: alpha(3), beta(3), gamma(1), delta(1), epsilon(1). CF(0) has four main subunits: a(1), b(1), b'(1) and c(9-12).

Its subcellular location is the plastid. It is found in the chloroplast thylakoid membrane. The catalysed reaction is ATP + H2O + 4 H(+)(in) = ADP + phosphate + 5 H(+)(out). Produces ATP from ADP in the presence of a proton gradient across the membrane. The catalytic sites are hosted primarily by the beta subunits. The sequence is that of ATP synthase subunit beta, chloroplastic from Barbarea verna (Land cress).